A 245-amino-acid polypeptide reads, in one-letter code: uncharacterized protein (245 aa).

Residues 1–19 form the signal peptide; it reads MKLTQFISYAILSLSGVQA.

The protein resides in the secreted. This is an uncharacterized protein from Arthroderma benhamiae (strain ATCC MYA-4681 / CBS 112371) (Trichophyton mentagrophytes).